The primary structure comprises 103 residues: Small ribosomal subunit protein uS10 (103 aa).

It belongs to the universal ribosomal protein uS10 family. As to quaternary structure, part of the 30S ribosomal subunit.

Functionally, involved in the binding of tRNA to the ribosomes. This is Small ribosomal subunit protein uS10 from Rubrobacter xylanophilus (strain DSM 9941 / JCM 11954 / NBRC 16129 / PRD-1).